We begin with the raw amino-acid sequence, 289 residues long: ATP synthase gamma chain (289 aa).

Belongs to the ATPase gamma chain family. F-type ATPases have 2 components, CF(1) - the catalytic core - and CF(0) - the membrane proton channel. CF(1) has five subunits: alpha(3), beta(3), gamma(1), delta(1), epsilon(1). CF(0) has three main subunits: a, b and c.

The protein resides in the cell membrane. In terms of biological role, produces ATP from ADP in the presence of a proton gradient across the membrane. The gamma chain is believed to be important in regulating ATPase activity and the flow of protons through the CF(0) complex. The polypeptide is ATP synthase gamma chain (Hamiltonella defensa subsp. Acyrthosiphon pisum (strain 5AT)).